The primary structure comprises 209 residues: ATP-dependent Clp protease proteolytic subunit (209 aa).

Residue S107 is the Nucleophile of the active site. H132 is a catalytic residue.

The protein belongs to the peptidase S14 family. As to quaternary structure, fourteen ClpP subunits assemble into 2 heptameric rings which stack back to back to give a disk-like structure with a central cavity, resembling the structure of eukaryotic proteasomes.

The protein resides in the cytoplasm. The enzyme catalyses Hydrolysis of proteins to small peptides in the presence of ATP and magnesium. alpha-casein is the usual test substrate. In the absence of ATP, only oligopeptides shorter than five residues are hydrolyzed (such as succinyl-Leu-Tyr-|-NHMec, and Leu-Tyr-Leu-|-Tyr-Trp, in which cleavage of the -Tyr-|-Leu- and -Tyr-|-Trp bonds also occurs).. Functionally, cleaves peptides in various proteins in a process that requires ATP hydrolysis. Has a chymotrypsin-like activity. Plays a major role in the degradation of misfolded proteins. The chain is ATP-dependent Clp protease proteolytic subunit from Methylobacterium nodulans (strain LMG 21967 / CNCM I-2342 / ORS 2060).